Reading from the N-terminus, the 352-residue chain is DNA polymerase IV (352 aa).

Positions 4–185 (IIHVDMDCFF…LPLSKIPGVG (182 aa)) constitute a UmuC domain. 2 residues coordinate Mg(2+): aspartate 8 and aspartate 103. Residue glutamate 104 is part of the active site.

This sequence belongs to the DNA polymerase type-Y family. As to quaternary structure, monomer. Requires Mg(2+) as cofactor.

It is found in the cytoplasm. The catalysed reaction is DNA(n) + a 2'-deoxyribonucleoside 5'-triphosphate = DNA(n+1) + diphosphate. Poorly processive, error-prone DNA polymerase involved in untargeted mutagenesis. Copies undamaged DNA at stalled replication forks, which arise in vivo from mismatched or misaligned primer ends. These misaligned primers can be extended by PolIV. Exhibits no 3'-5' exonuclease (proofreading) activity. May be involved in translesional synthesis, in conjunction with the beta clamp from PolIII. The chain is DNA polymerase IV from Yersinia pseudotuberculosis serotype O:1b (strain IP 31758).